The chain runs to 377 residues: 2-aminoethylphosphonate--pyruvate transaminase (377 aa).

N6-(pyridoxal phosphate)lysine is present on K194.

This sequence belongs to the class-V pyridoxal-phosphate-dependent aminotransferase family. PhnW subfamily. As to quaternary structure, homodimer. Pyridoxal 5'-phosphate is required as a cofactor.

It catalyses the reaction (2-aminoethyl)phosphonate + pyruvate = phosphonoacetaldehyde + L-alanine. Involved in phosphonate degradation. The sequence is that of 2-aminoethylphosphonate--pyruvate transaminase from Cupriavidus necator (strain ATCC 17699 / DSM 428 / KCTC 22496 / NCIMB 10442 / H16 / Stanier 337) (Ralstonia eutropha).